A 198-amino-acid chain; its full sequence is Guanylate kinase (198 aa).

The Guanylate kinase-like domain maps to lysine 6 to histidine 192. Position 13–20 (glycine 13–glycine 20) interacts with ATP.

The protein belongs to the guanylate kinase family.

It localises to the cytoplasm. It catalyses the reaction GMP + ATP = GDP + ADP. Its function is as follows. Essential for recycling GMP and indirectly, cGMP. The sequence is that of Guanylate kinase from Mycoplasmopsis synoviae (strain 53) (Mycoplasma synoviae).